A 180-amino-acid chain; its full sequence is Signal peptidase complex subunit 3 (180 aa).

Topologically, residues 1-12 (MHNLLSRANALL) are cytoplasmic. The helical; Signal-anchor for type II membrane protein transmembrane segment at 13 to 33 (AFTLWVMAAVTAACFLSTVFL) threads the bilayer. Topologically, residues 34–180 (DYTVPTKLTV…PTTYTTTRRS (147 aa)) are lumenal. N141 carries N-linked (GlcNAc...) asparagine glycosylation.

This sequence belongs to the SPCS3 family. As to quaternary structure, component of the signal peptidase complex (SPC) composed of a catalytic subunit sec-11 and three accessory subunits spcs-1, spcs-2 and spcs-3. The complex induces a local thinning of the ER membrane which is used to measure the length of the signal peptide (SP) h-region of protein substrates. This ensures the selectivity of the complex towards h-regions shorter than 18-20 amino acids.

Its subcellular location is the endoplasmic reticulum membrane. In terms of biological role, essential component of the signal peptidase complex (SPC) which catalyzes the cleavage of N-terminal signal sequences from nascent proteins as they are translocated into the lumen of the endoplasmic reticulum. Essential for the SPC catalytic activity, possibly by stabilizing and positioning the active center of the complex close to the lumenal surface. This Caenorhabditis elegans protein is Signal peptidase complex subunit 3.